The primary structure comprises 248 residues: ATP synthase subunit a, chloroplastic (248 aa).

5 consecutive transmembrane segments (helical) span residues 37-57 (AQVL…AFVT), 96-116 (VPFI…GALF), 135-155 (INTT…AGLH), 200-220 (LVVA…MMFL), and 221-241 (GLFT…AYIG).

The protein belongs to the ATPase A chain family. In terms of assembly, F-type ATPases have 2 components, CF(1) - the catalytic core - and CF(0) - the membrane proton channel. CF(1) has five subunits: alpha(3), beta(3), gamma(1), delta(1), epsilon(1). CF(0) has four main subunits: a, b, b' and c.

It is found in the plastid. The protein resides in the chloroplast thylakoid membrane. Functionally, key component of the proton channel; it plays a direct role in the translocation of protons across the membrane. The chain is ATP synthase subunit a, chloroplastic from Psilotum nudum (Whisk fern).